A 251-amino-acid chain; its full sequence is tRNA (guanine-N(1)-)-methyltransferase (251 aa).

S-adenosyl-L-methionine is bound by residues G113 and 133–138 (IGDYVL).

The protein belongs to the RNA methyltransferase TrmD family. In terms of assembly, homodimer.

Its subcellular location is the cytoplasm. The catalysed reaction is guanosine(37) in tRNA + S-adenosyl-L-methionine = N(1)-methylguanosine(37) in tRNA + S-adenosyl-L-homocysteine + H(+). Functionally, specifically methylates guanosine-37 in various tRNAs. The protein is tRNA (guanine-N(1)-)-methyltransferase of Pectobacterium carotovorum subsp. carotovorum (strain PC1).